A 1058-amino-acid polypeptide reads, in one-letter code: MSKRKDIQKIMVIGSGPIIIGQAAEFDYAGTQACLALKEEGYKVILVNSNPATIMTDKEIADKVYIEPLTLEFVNRIIRKERPDAILPTLGGQTGLNMAMALSKAGILDDLEIELLGTKLSAIDQAEDRDLFKQLMQELDQPIPESTIVKTVDEAVTFARDIGYPVIVRPAFTLGGTGGGICSSEEELCEITENGLKLSPVTQCLIERSIAGFKEIEYEVMRDSADNALVVCNMENFDPVGIHTGDSIVFAPTQTLSDIENQMLRDASLKIIRALKIEGGCNVQLALDPYSFKYYVIEVNPRVSRSSALASKATGYPIAKLAAKIAVGLTLDEMTNPITGTTYAMFEPALDYVVAKIPRFPFDKFEHGERQLGTQMKATGEVMAIGRNLEESLLKACRSLEIGVCHNEMTSLSNISDEELVTKVIKAQDDRLFYLSEAIRRGYSIEELESLTKIDLFFLDKLLHIVEIEQELQMHVDHLESLKKAKRYGFSDQKIAEIWQKDESDIRAMRHSHSLYPVYKMVDTCAAEFDAKTPYFYSTYELENESVQSNKESILVLGSGPIRIGQGVEFDYATVHSVKAIQKAGYEAIIMNSNPETVSTDFSVSDKLYFEPLTFEDVMNVIDLEQPKGVIVQFGGQTAINLAQSLSDAGVTILGTQVEDLDRAEDRDLFEKALKELGIPQPQGQTATNEEEALEAAKKIGFPVLVRPSYVLGGRAMEIVENKEDLREYIRTAVKASPEHPILVDSYIFGKECEVDAISDGKSVLIPGIMEHIERAGVHSGDSMAVYPPQQLSKQIQETIAEYTKRLAIGLNCIGMMNVQFVIKNEQVYVIEVNPRASRTVPFLSKVTGIPMAQIATKLILGQTLKDLGYEDGLYPQSQLVHIKAPVFSFTKLAQVDSLLGPEMKSTGEVMGSDTSLEKALYKAFEANNSHLSEFGQIVFTIADDSKAEALSLARRFKAIGYQIMATQGTAAYFAEQGLSACLVGKIGDAANDIPTLVRHGHVQAIVNTVGIKRTADKDGQMIRSSAIEQGVPLFTALDTAKAMLTVLESRCFNIEAI.

The segment at 1-401 (MSKRKDIQKI…SLLKACRSLE (401 aa)) is carboxyphosphate synthetic domain. Residues Arg-129, Arg-169, Gly-175, Gly-176, Arg-208, Ile-210, Glu-215, Gly-241, Ile-242, His-243, Gln-284, and Glu-298 each coordinate ATP. The region spanning 133–327 (KQLMQELDQP…IAKLAAKIAV (195 aa)) is the ATP-grasp 1 domain. Gln-284, Glu-298, and Asn-300 together coordinate Mg(2+). Mn(2+) is bound by residues Gln-284, Glu-298, and Asn-300. Residues 402–546 (IGVCHNEMTS…YSTYELENES (145 aa)) are oligomerization domain. The interval 547-929 (VQSNKESILV…ALYKAFEANN (383 aa)) is carbamoyl phosphate synthetic domain. The 191-residue stretch at 671–861 (EKALKELGIP…MAQIATKLIL (191 aa)) folds into the ATP-grasp 2 domain. Residues Arg-707, Ser-746, Ile-748, Glu-752, Gly-777, Val-778, His-779, Ser-780, Gln-820, and Glu-832 each coordinate ATP. Mg(2+)-binding residues include Gln-820, Glu-832, and Asn-834. Gln-820, Glu-832, and Asn-834 together coordinate Mn(2+). The region spanning 930–1058 (SHLSEFGQIV…ESRCFNIEAI (129 aa)) is the MGS-like domain. Residues 930-1058 (SHLSEFGQIV…ESRCFNIEAI (129 aa)) form an allosteric domain region.

The protein belongs to the CarB family. In terms of assembly, composed of two chains; the small (or glutamine) chain promotes the hydrolysis of glutamine to ammonia, which is used by the large (or ammonia) chain to synthesize carbamoyl phosphate. Tetramer of heterodimers (alpha,beta)4. Mg(2+) serves as cofactor. The cofactor is Mn(2+).

The enzyme catalyses hydrogencarbonate + L-glutamine + 2 ATP + H2O = carbamoyl phosphate + L-glutamate + 2 ADP + phosphate + 2 H(+). It carries out the reaction hydrogencarbonate + NH4(+) + 2 ATP = carbamoyl phosphate + 2 ADP + phosphate + 2 H(+). It functions in the pathway amino-acid biosynthesis; L-arginine biosynthesis; carbamoyl phosphate from bicarbonate: step 1/1. Its pathway is pyrimidine metabolism; UMP biosynthesis via de novo pathway; (S)-dihydroorotate from bicarbonate: step 1/3. In terms of biological role, large subunit of the glutamine-dependent carbamoyl phosphate synthetase (CPSase). CPSase catalyzes the formation of carbamoyl phosphate from the ammonia moiety of glutamine, carbonate, and phosphate donated by ATP, constituting the first step of 2 biosynthetic pathways, one leading to arginine and/or urea and the other to pyrimidine nucleotides. The large subunit (synthetase) binds the substrates ammonia (free or transferred from glutamine from the small subunit), hydrogencarbonate and ATP and carries out an ATP-coupled ligase reaction, activating hydrogencarbonate by forming carboxy phosphate which reacts with ammonia to form carbamoyl phosphate. This is Carbamoyl phosphate synthase large chain from Streptococcus pyogenes serotype M5 (strain Manfredo).